The following is a 358-amino-acid chain: Popeye domain-containing protein 1 (358 aa).

Topologically, residues 1-48 are extracellular; sequence MNSTESIPLAQSTVAGFTSELESLTPVPSNETTCENWREIHHLVFHVA. N-linked (GlcNAc...) asparagine glycosylation is found at Asn2 and Asn30. Residues 49–69 traverse the membrane as a helical segment; that stretch reads NVCFAVGLLIPTTLHLHMILL. Arg70 is a topological domain (cytoplasmic). The chain crosses the membrane as a helical span at residues 71–91; the sequence is VMLSLGCTLYVVWATLYRCAL. Asp92 is a topological domain (extracellular). A helical transmembrane segment spans residues 93-113; it reads VMIWNSVFLGINILHLSYLLY. Residues 93-115 are required for interaction with CAV3; that stretch reads VMIWNSVFLGINILHLSYLLYKK. The Cytoplasmic portion of the chain corresponds to 114-358; the sequence is KKRPVKIEKE…PDALKVHQLP (245 aa). The required for interaction with KCNK2 stretch occupies residues 136–186; it reads RVPPDLFRRLTGQFCMIQTLKRGQVYATEDKTSVDDRLSILLKGRMKVSYR. Ser295 and Ser318 each carry phosphoserine. Positions 313–323 are enriched in low complexity; that stretch reads SSSTASLPMSS. The tract at residues 313–350 is disordered; that stretch reads SSSTASLPMSSPQQRASAKMKPIEEGVEDDDEVFVSPD.

This sequence belongs to the popeye family. As to quaternary structure, homodimer. Homodimerization requires the C-terminus cytoplasmic region. Interacts (via the C-terminus cytoplasmic tail) with TJP1. Interacts (via the C-terminus cytoplasmic tail) with ARHGEF25/GEFT (via the DH domain). Interacts (via the C-terminus cytoplasmic tail) with VAMP3. Interacts with KCNK2; the interaction enhances KCNK2 surface expression and is inhibited by cAMP. Interacts with CAV3. Expressed in epithelial cells, skeletal muscle, heart and intestinal smooth muscle (at protein level). Expressed in fetal and adult heart and skeletal muscle.

It localises to the lateral cell membrane. It is found in the cell junction. Its subcellular location is the tight junction. The protein resides in the membrane. The protein localises to the cell membrane. It localises to the sarcolemma. It is found in the caveola. Its function is as follows. Cell adhesion molecule involved in the establishment and/or maintenance of cell integrity. Involved in the formation and regulation of the tight junction (TJ) paracellular permeability barrier in epithelial cells. Plays a role in VAMP3-mediated vesicular transport and recycling of different receptor molecules through its interaction with VAMP3. Plays a role in the regulation of cell shape and movement by modulating the Rho-family GTPase activity through its interaction with ARHGEF25/GEFT. Induces primordial adhesive contact and aggregation of epithelial cells in a Ca(2+)-independent manner. Also involved in striated muscle regeneration and repair and in the regulation of cell spreading. Important for the maintenance of cardiac function. Plays a regulatory function in heart rate dynamics mediated, at least in part, through cAMP-binding and, probably, by increasing cell surface expression of the potassium channel KCNK2 and enhancing current density. Is a caveolae-associated protein important for the preservation of caveolae structural and functional integrity as well as for heart protection against ischemia injury. In Mus musculus (Mouse), this protein is Popeye domain-containing protein 1.